The chain runs to 1437 residues: MDFSFSFMQGIMGNTIQQPPQLIDSANIRQEDAFDNNSDIAEDGGQTPYEATLQQGFQYPATTEDLPPLTNGYPSSISVYETQTKYQSYNQYPNGSANGFGAVRNFSPTDYYHSEIPNTRPHEILEKPSPPQPPPPPSVPQTVIPKKTGSPEIKLKITKTIQNGRELFESSLCGDLLNEVQASEHTKSKHESRKEKRKKSNKHDSSRSEERKSHKIPKLEPEEQNRPNERVDTVSEKPREEPVLKEEAPVQPILSSVPTTEVSTGVKFQVGDLVWSKVGTYPWWPCMVSSDPQLEVHTKINTRGAREYHVQFFSNQPERAWVHEKRVREYKGHKQYEELLAEATKQASNHSEKQKIRKPRPQRERAQWDIGIAHAEKALKMTREERIEQYTFIYIDKQPEEALSQAKKSVASKTEVKKTRRPRSVLNTQPEQTNAGEVASSLSSTEIRRHSQRRHTSAEEEEPPPVKIAWKTAAARKSLPASITMHKGSLDLQKCNMSPVVKIEQVFALQNATGDGKFIDQFVYSTKGIGNKTEISVRGQDRLIISTPNQRNEKPTQSVSSPEATSGSTGSVEKKQQRRSIRTRSESEKSTEVVPKKKIKKEQVETVPQATVKTGLQKGASEISDSCKPLKKRSRASTDVEMTSSAYRDTSDSDSRGLSDLQVGFGKQVDSPSATADADVSDVQSMDSSLSRRGTGMSKKDTVCQICESSGDSLIPCEGECCKHFHLECLGLASLPDSKFICMECKTGQHPCFSCKVSGKDVKRCSVGACGKFYHEACVRKFPTAIFESKGFRCPQHCCSACSMEKDIHKASKGRMMRCLRCPVAYHSGDACIAAGSMLVSSYILICSNHSKRSSNSSAVNVGFCFVCARGLIVQDHSDPMFSSYAYKSHYLLNESNRAELMKLPMIPSSSASKKKCEKGGRLLCCESCPASFHPECLSIEMPEGCWNCNDCKAGKKLHYKQIVWVKLGNYRWWPAEICNPRSVPLNIQGLKHDLGDFPVFFFGSHDYYWVHQGRVFPYVEGDKSFAEGQTSINKTFKKALEEAAKRFQELKAQRESKEALEIEKNSRKPPPYKHIKANKVIGKVQIQVADLSEIPRCNCKPADENPCGLESECLNRMLQYECHPQVCPAGDRCQNQCFTKRLYPDAEIIKTERRGWGLRTKRSIKKGEFVNEYVGELIDEEECRLRIKRAHENSVTNFYMLTVTKDRIIDAGPKGNYSRFMNHSCNPNCETQKWTVNGDVRVGLFALCDIPAGMELTFNYNLDCLGNGRTECHCGADNCSGFLGVRPKSACASTNEEKAKNAKLKQKRRKIKTEPKQMHEDYCFQCGDGGELVMCDKKDCPKAYHLLCLNLTQPPYGKWECPWHQCDECSSAAVSFCEFCPHSFCKDHEKGALVPSALEGRLCCSEHDPMAPVSPEYWSKIKCKWESQDHGEEVKE.

2 disordered regions span residues 121–157 and 181–252; these read PHEILEKPSPPQPPPPPSVPQTVIPKKTGSPEIKLKI and QASE…PVQP. Pro residues predominate over residues 128–139; it reads PSPPQPPPPPSV. Serine 150 carries the post-translational modification Phosphoserine. Residues 154-157 carry the KIKL motif; sequence KLKI. A compositionally biased stretch (basic residues) spans 187–201; that stretch reads KSKHESRKEKRKKSN. The segment covering 202–248 has biased composition (basic and acidic residues); the sequence is KHDSSRSEERKSHKIPKLEPEEQNRPNERVDTVSEKPREEPVLKEEA. Glycyl lysine isopeptide (Lys-Gly) (interchain with G-Cter in SUMO2) cross-links involve residues lysine 218 and lysine 245. The PWWP 1 domain maps to 270 to 333; it reads VGDLVWSKVG…EKRVREYKGH (64 aa). Disordered stretches follow at residues 344–365 and 406–465; these read TKQASNHSEKQKIRKPRPQRER and AKKS…EPPP. A Glycyl lysine isopeptide (Lys-Gly) (interchain with G-Cter in SUMO2) cross-link involves residue lysine 413. The span at 425–445 shows a compositional bias: polar residues; that stretch reads VLNTQPEQTNAGEVASSLSST. Position 457 is a phosphoserine (serine 457). Residues lysine 502 and lysine 532 each participate in a glycyl lysine isopeptide (Lys-Gly) (interchain with G-Cter in SUMO2) cross-link. The disordered stretch occupies residues 540 to 696; it reads QDRLIISTPN…DSSLSRRGTG (157 aa). The segment covering 546-571 has biased composition (polar residues); it reads STPNQRNEKPTQSVSSPEATSGSTGS. The span at 583–595 shows a compositional bias: basic and acidic residues; the sequence is TRSESEKSTEVVP. A phosphoserine mark is found at serine 585, serine 587, and serine 590. A Glycyl lysine isopeptide (Lys-Gly) (interchain with G-Cter in SUMO2) cross-link involves residue lysine 628. At serine 655 the chain carries Phosphoserine. Polar residues predominate over residues 682–692; sequence DVQSMDSSLSR. 3 consecutive PHD-type zinc fingers follow at residues 701–748, 749–805, and 862–955; these read DTVC…CKTG, QHPC…CSME, and VGFC…CKAG. Residue lysine 790 is modified to N6-acetyllysine. One can recognise a PWWP 2 domain in the interval 960–1022; that stretch reads YKQIVWVKLG…QGRVFPYVEG (63 aa). Residues 1033–1069 adopt a coiled-coil conformation; sequence INKTFKKALEEAAKRFQELKAQRESKEALEIEKNSRK. Positions 1093-1143 constitute an AWS domain; that stretch reads SEIPRCNCKPADENPCGLESECLNRMLQYECHPQVCPAGDRCQNQCFTKRL. The region spanning 1145–1262 is the SET domain; it reads PDAEIIKTER…AGMELTFNYN (118 aa). A Glycyl lysine isopeptide (Lys-Gly) (interchain with G-Cter in SUMO2) cross-link involves residue lysine 1151. The Post-SET domain occupies 1269-1285; sequence GRTECHCGADNCSGFLG. The segment at 1321–1368 adopts a PHD-type 4; atypical zinc-finger fold; that stretch reads EDYCFQCGDGGELVMCDKKDCPKAYHLLCLNLTQPPYGKWECPWHQCD.

The protein belongs to the class V-like SAM-binding methyltransferase superfamily. Histone-lysine methyltransferase family. SET2 subfamily. In terms of assembly, interacts with BRD4. Interacts (via KIKL motif) with BRD3 (via NET domain). As to expression, highly expressed in brain, heart and skeletal muscle. Expressed at lower level in liver and lung.

It is found in the nucleus. It localises to the chromosome. It catalyses the reaction L-lysyl(4)-[histone H3] + 2 S-adenosyl-L-methionine = N(6),N(6)-dimethyl-L-lysyl(4)-[histone H3] + 2 S-adenosyl-L-homocysteine + 2 H(+). The enzyme catalyses L-lysyl(27)-[histone H3] + 2 S-adenosyl-L-methionine = N(6),N(6)-dimethyl-L-lysyl(27)-[histone H3] + 2 S-adenosyl-L-homocysteine + 2 H(+). Histone methyltransferase. Preferentially dimethylates 'Lys-4' and 'Lys-27' of histone H3 forming H3K4me2 and H3K27me2. H3 'Lys-4' methylation represents a specific tag for epigenetic transcriptional activation, while 'Lys-27' is a mark for transcriptional repression. This Homo sapiens (Human) protein is Histone-lysine N-methyltransferase NSD3.